Consider the following 469-residue polypeptide: Neuraminidase (469 aa).

The Intravirion segment spans residues 1 to 9 (MNPNQKIIT). Residues 10-30 (IGSVSLTIATVCFLMQIAILV) traverse the membrane as a helical segment. Positions 11-33 (GSVSLTIATVCFLMQIAILVTTV) are involved in apical transport and lipid raft association. The Virion surface portion of the chain corresponds to 31–469 (TTVTLHFKQY…DGANINFMPI (439 aa)). Residues 36–88 (HFKQYECDSPASNQVMPCEPIIIERNITEIVYLNNTTIDKEKCPKVVEYRNWS) are hypervariable stalk region. N-linked (GlcNAc...) asparagine; by host glycans are attached at residues asparagine 61, asparagine 69, asparagine 70, and asparagine 86. Residues 91–469 (QCQITGFAPF…DGANINFMPI (379 aa)) are head of neuraminidase. 8 disulfide bridges follow: cysteine 92/cysteine 417, cysteine 124/cysteine 129, cysteine 183/cysteine 230, cysteine 232/cysteine 237, cysteine 278/cysteine 291, cysteine 280/cysteine 289, cysteine 318/cysteine 337, and cysteine 421/cysteine 447. Arginine 118 serves as a coordination point for substrate. A glycan (N-linked (GlcNAc...) asparagine; by host) is linked at asparagine 146. The Proton donor/acceptor role is filled by aspartate 151. Arginine 152 lines the substrate pocket. N-linked (GlcNAc...) asparagine; by host glycans are attached at residues asparagine 200 and asparagine 234. 276-277 (EE) provides a ligand contact to substrate. Arginine 292 serves as a coordination point for substrate. Ca(2+)-binding residues include aspartate 293, glycine 297, and aspartate 324. Residues 324–350 (DTPRNDDRSSNSNCRNPNNERGNQGVK) are disordered. Residues 333–342 (SNSNCRNPNN) are compositionally biased toward low complexity. Residue arginine 371 coordinates substrate. Asparagine 402 is a glycosylation site (N-linked (GlcNAc...) asparagine; by host). Tyrosine 406 serves as the catalytic Nucleophile.

This sequence belongs to the glycosyl hydrolase 34 family. In terms of assembly, homotetramer. Requires Ca(2+) as cofactor. In terms of processing, N-glycosylated.

It localises to the virion membrane. The protein resides in the host apical cell membrane. It carries out the reaction Hydrolysis of alpha-(2-&gt;3)-, alpha-(2-&gt;6)-, alpha-(2-&gt;8)- glycosidic linkages of terminal sialic acid residues in oligosaccharides, glycoproteins, glycolipids, colominic acid and synthetic substrates.. With respect to regulation, inhibited by the neuraminidase inhibitors zanamivir (Relenza) and oseltamivir (Tamiflu). These drugs interfere with the release of progeny virus from infected cells and are effective against all influenza strains. Resistance to neuraminidase inhibitors is quite rare. In terms of biological role, catalyzes the removal of terminal sialic acid residues from viral and cellular glycoconjugates. Cleaves off the terminal sialic acids on the glycosylated HA during virus budding to facilitate virus release. Additionally helps virus spread through the circulation by further removing sialic acids from the cell surface. These cleavages prevent self-aggregation and ensure the efficient spread of the progeny virus from cell to cell. Otherwise, infection would be limited to one round of replication. Described as a receptor-destroying enzyme because it cleaves a terminal sialic acid from the cellular receptors. May facilitate viral invasion of the upper airways by cleaving the sialic acid moieties on the mucin of the airway epithelial cells. Likely to plays a role in the budding process through its association with lipid rafts during intracellular transport. May additionally display a raft-association independent effect on budding. Plays a role in the determination of host range restriction on replication and virulence. Sialidase activity in late endosome/lysosome traffic seems to enhance virus replication. This chain is Neuraminidase, found in Aves (whales).